Consider the following 588-residue polypeptide: Glutamyl-tRNA(Gln) amidotransferase subunit B, mitochondrial (588 aa).

A mitochondrion-targeting transit peptide spans methionine 1 to proline 109. The segment covering serine 22–proline 35 has biased composition (low complexity). A disordered region spans residues serine 22–leucine 50.

It belongs to the GatB/GatE family. GatB subfamily. As to quaternary structure, subunit of the heterotrimeric GatCAB amidotransferase (AdT) complex, composed of A, B and C subunits.

It is found in the mitochondrion. The enzyme catalyses L-glutamyl-tRNA(Gln) + L-glutamine + ATP + H2O = L-glutaminyl-tRNA(Gln) + L-glutamate + ADP + phosphate + H(+). Allows the formation of correctly charged Gln-tRNA(Gln) through the transamidation of misacylated Glu-tRNA(Gln) in the mitochondria. The reaction takes place in the presence of glutamine and ATP through an activated gamma-phospho-Glu-tRNA(Gln). This is Glutamyl-tRNA(Gln) amidotransferase subunit B, mitochondrial from Penicillium rubens (strain ATCC 28089 / DSM 1075 / NRRL 1951 / Wisconsin 54-1255) (Penicillium chrysogenum).